The primary structure comprises 112 residues: Large ribosomal subunit protein P1w (112 aa).

The segment at 85–112 (AAAPAAEEKKKDEPAEESDGDLGFGLFD) is disordered. A Phosphoserine modification is found at Ser102.

This sequence belongs to the eukaryotic ribosomal protein P1/P2 family. P1 and P2 exist as dimers at the large ribosomal subunit.

Plays an important role in the elongation step of protein synthesis. This is Large ribosomal subunit protein P1w (RPP1A) from Arabidopsis thaliana (Mouse-ear cress).